Consider the following 312-residue polypeptide: Methionyl-tRNA formyltransferase (312 aa).

Residue 109–112 (SLLP) coordinates (6S)-5,6,7,8-tetrahydrofolate.

This sequence belongs to the Fmt family.

It catalyses the reaction L-methionyl-tRNA(fMet) + (6R)-10-formyltetrahydrofolate = N-formyl-L-methionyl-tRNA(fMet) + (6S)-5,6,7,8-tetrahydrofolate + H(+). Functionally, attaches a formyl group to the free amino group of methionyl-tRNA(fMet). The formyl group appears to play a dual role in the initiator identity of N-formylmethionyl-tRNA by promoting its recognition by IF2 and preventing the misappropriation of this tRNA by the elongation apparatus. The chain is Methionyl-tRNA formyltransferase from Anaeromyxobacter dehalogenans (strain 2CP-C).